The sequence spans 141 residues: Nucleoside diphosphate kinase (141 aa).

ATP is bound by residues Lys11, Phe59, Arg87, Thr93, Arg104, and Asn114. His117 serves as the catalytic Pros-phosphohistidine intermediate.

It belongs to the NDK family. Homotetramer. It depends on Mg(2+) as a cofactor.

It is found in the cytoplasm. The catalysed reaction is a 2'-deoxyribonucleoside 5'-diphosphate + ATP = a 2'-deoxyribonucleoside 5'-triphosphate + ADP. It carries out the reaction a ribonucleoside 5'-diphosphate + ATP = a ribonucleoside 5'-triphosphate + ADP. Functionally, major role in the synthesis of nucleoside triphosphates other than ATP. The ATP gamma phosphate is transferred to the NDP beta phosphate via a ping-pong mechanism, using a phosphorylated active-site intermediate. The protein is Nucleoside diphosphate kinase of Haemophilus influenzae (strain ATCC 51907 / DSM 11121 / KW20 / Rd).